Reading from the N-terminus, the 92-residue chain is Small ribosomal subunit protein uS19c (92 aa).

Belongs to the universal ribosomal protein uS19 family.

It is found in the plastid. Functionally, protein S19 forms a complex with S13 that binds strongly to the 16S ribosomal RNA. This Cuscuta obtusiflora (Peruvian dodder) protein is Small ribosomal subunit protein uS19c.